A 583-amino-acid chain; its full sequence is GTP diphosphokinase CRSH1, chloroplastic (583 aa).

The span at 1 to 13 (MATAATTSAAAIP) shows a compositional bias: low complexity. The tract at residues 1–68 (MATAATTSAA…SSSSSTPAEG (68 aa)) is disordered. A chloroplast-targeting transit peptide spans 1-69 (MATAATTSAA…SSSSTPAEGG (69 aa)). The segment covering 19–39 (RRQHPHPRRPGLRPRRLHRLR) has biased composition (basic residues). The segment covering 40-66 (LPAQAAAAAAASSPSTSSSSSSSSTPA) has biased composition (low complexity). The HD domain maps to 119 to 219 (ALARALAIAA…LELALKLDMM (101 aa)). 2 EF-hand domains span residues 473 to 508 (GDSN…LGAG) and 510 to 542 (KDAK…IELM). Ca(2+) contacts are provided by Asp486, Asn488, Asp490, Arg492, Glu497, Asp520, Asn522, Asp524, Ser526, and Glu531.

The protein belongs to the RelA/SpoT family. As to expression, expressed in roots and shoots.

It is found in the plastid. The protein resides in the chloroplast. The enzyme catalyses GTP + ATP = guanosine 3'-diphosphate 5'-triphosphate + AMP. Its activity is regulated as follows. Activated by calcium. Its function is as follows. Possesses calcium-dependent ppGpp (guanosine 3'-diphosphate 5'-diphosphate) synthetase activity in vitro and is able to functionally complement E.coli relA mutants. May be involved in a rapid plant ppGpp-mediated response to pathogens and other stresses. This Oryza sativa subsp. japonica (Rice) protein is GTP diphosphokinase CRSH1, chloroplastic.